A 402-amino-acid polypeptide reads, in one-letter code: Argininosuccinate synthase (402 aa).

ATP contacts are provided by residues 10 to 18 (AYSGGLDTS) and Ala37. Tyr88 and Ser93 together coordinate L-citrulline. Position 118 (Gly118) interacts with ATP. 3 residues coordinate L-aspartate: Thr120, Asn124, and Asp125. Residue Asn124 coordinates L-citrulline. Positions 128, 179, 188, 264, and 276 each coordinate L-citrulline.

It belongs to the argininosuccinate synthase family. Type 1 subfamily. As to quaternary structure, homotetramer.

It localises to the cytoplasm. It carries out the reaction L-citrulline + L-aspartate + ATP = 2-(N(omega)-L-arginino)succinate + AMP + diphosphate + H(+). The protein operates within amino-acid biosynthesis; L-arginine biosynthesis; L-arginine from L-ornithine and carbamoyl phosphate: step 2/3. This is Argininosuccinate synthase from Alkalilimnicola ehrlichii (strain ATCC BAA-1101 / DSM 17681 / MLHE-1).